A 239-amino-acid chain; its full sequence is tRNA (guanine-N(1)-)-methyltransferase (239 aa).

S-adenosyl-L-methionine-binding positions include Gly-112 and 131-136 (LGDFIL).

It belongs to the RNA methyltransferase TrmD family. As to quaternary structure, homodimer.

The protein resides in the cytoplasm. The catalysed reaction is guanosine(37) in tRNA + S-adenosyl-L-methionine = N(1)-methylguanosine(37) in tRNA + S-adenosyl-L-homocysteine + H(+). Its function is as follows. Specifically methylates guanosine-37 in various tRNAs. This Clostridium tetani (strain Massachusetts / E88) protein is tRNA (guanine-N(1)-)-methyltransferase.